A 427-amino-acid chain; its full sequence is Serine hydroxymethyltransferase (427 aa).

Residues L124 and 128–130 (GHL) contribute to the (6S)-5,6,7,8-tetrahydrofolate site. K233 carries the post-translational modification N6-(pyridoxal phosphate)lysine.

Belongs to the SHMT family. As to quaternary structure, homodimer. Pyridoxal 5'-phosphate is required as a cofactor.

It is found in the cytoplasm. The enzyme catalyses (6R)-5,10-methylene-5,6,7,8-tetrahydrofolate + glycine + H2O = (6S)-5,6,7,8-tetrahydrofolate + L-serine. It participates in one-carbon metabolism; tetrahydrofolate interconversion. It functions in the pathway amino-acid biosynthesis; glycine biosynthesis; glycine from L-serine: step 1/1. Catalyzes the reversible interconversion of serine and glycine with tetrahydrofolate (THF) serving as the one-carbon carrier. This reaction serves as the major source of one-carbon groups required for the biosynthesis of purines, thymidylate, methionine, and other important biomolecules. Also exhibits THF-independent aldolase activity toward beta-hydroxyamino acids, producing glycine and aldehydes, via a retro-aldol mechanism. In Acidothermus cellulolyticus (strain ATCC 43068 / DSM 8971 / 11B), this protein is Serine hydroxymethyltransferase.